The sequence spans 658 residues: Structure-specific endonuclease subunit SLX1 (658 aa).

Residues 12–92 (PFYACYFLRS…AKPHLSRHLK (81 aa)) form the GIY-YIG domain. 4 disordered regions span residues 29 to 52 (YIGSTPAPPRRKRQHNGHLTQGAY), 239 to 269 (GVAEHPVKKRQTSSRQKPHTEETSAWPETLP), 288 to 328 (PIPQ…NGVD), and 594 to 658 (TTSR…IDLT). Composition is skewed to basic and acidic residues over residues 308–324 (KLSDKARPSALEDHDAE) and 627–640 (SKIDGDGAGKDTKK). Polar residues predominate over residues 641 to 652 (NTTQKAKSNETS).

This sequence belongs to the SLX1 family. As to quaternary structure, forms a heterodimer with SLX4. It depends on a divalent metal cation as a cofactor.

Its subcellular location is the nucleus. In terms of biological role, catalytic subunit of the SLX1-SLX4 structure-specific endonuclease that resolves DNA secondary structures generated during DNA repair and recombination. Has endonuclease activity towards branched DNA substrates, introducing single-strand cuts in duplex DNA close to junctions with ss-DNA. This chain is Structure-specific endonuclease subunit SLX1, found in Mycosarcoma maydis (Corn smut fungus).